The following is a 387-amino-acid chain: Cysteine desulfurase IscS (387 aa).

Pyridoxal 5'-phosphate contacts are provided by residues 73 to 74 (AT), Asn-155, Gln-183, and 203 to 205 (SAH). Lys-206 is subject to N6-(pyridoxal phosphate)lysine. Position 241 (Thr-241) interacts with pyridoxal 5'-phosphate. Cys-328 acts as the Cysteine persulfide intermediate in catalysis. A [2Fe-2S] cluster-binding site is contributed by Cys-328.

The protein belongs to the class-V pyridoxal-phosphate-dependent aminotransferase family. NifS/IscS subfamily. In terms of assembly, homodimer. Forms a heterotetramer with IscU, interacts with other sulfur acceptors. Pyridoxal 5'-phosphate is required as a cofactor.

Its subcellular location is the cytoplasm. It carries out the reaction (sulfur carrier)-H + L-cysteine = (sulfur carrier)-SH + L-alanine. It participates in cofactor biosynthesis; iron-sulfur cluster biosynthesis. Its function is as follows. Master enzyme that delivers sulfur to a number of partners involved in Fe-S cluster assembly, tRNA modification or cofactor biosynthesis. Catalyzes the removal of elemental sulfur atoms from cysteine to produce alanine. Functions as a sulfur delivery protein for Fe-S cluster synthesis onto IscU, an Fe-S scaffold assembly protein, as well as other S acceptor proteins. This chain is Cysteine desulfurase IscS, found in Helicobacter pylori (strain J99 / ATCC 700824) (Campylobacter pylori J99).